Consider the following 414-residue polypeptide: TAR DNA-binding protein 43 (414 aa).

Glycyl lysine isopeptide (Lys-Gly) (interchain with G-Cter in SUMO2) cross-links involve residues Lys-79, Lys-84, Lys-95, Lys-102, and Lys-181. RRM domains follow at residues 104–200 (SDLI…RCTE) and 191–262 (RKVF…NAEP). Ser-183 carries the post-translational modification Phosphoserine. The interval 216–414 (EVVDVFIPKP…MDSKSSGWGM (199 aa)) is interaction with UBQLN2. Basic and acidic residues predominate over residues 261-274 (EPKHNSNRQLERSG). Disordered regions lie at residues 261–301 (EPKH…GLGN) and 341–414 (ASQQ…GWGM). A Glycyl lysine isopeptide (Lys-Gly) (interchain with G-Cter in SUMO2) cross-link involves residue Lys-263. Positions 275–301 (RFGGNPGGFGNQGGFGNSRGGGAGLGN) are enriched in gly residues. Position 292 is a phosphoserine (Ser-292). Position 293 is an omega-N-methylarginine (Arg-293). 2 stretches are compositionally biased toward low complexity: residues 342 to 358 (SQQN…SQGS) and 368 to 392 (GSGN…SNAG). Positions 393–402 (SGSGFNGGFG) are enriched in gly residues. The segment covering 405–414 (MDSKSSGWGM) has biased composition (polar residues).

Homodimer. Homooligomer (via its N-terminal domain). Interacts with BRDT. Binds specifically to pyrimidine-rich motifs of TAR DNA and to single stranded TG repeated sequences. Binds to RNA, specifically to UG repeated sequences with a minimum of six contiguous repeats. Interacts with ATXN2; the interaction is RNA-dependent. Interacts with MATR3. Interacts with UBQLN2. Interacts with HNRNPA2B1. Interacts with ZNF106. Interacts with CNOT7/CAF1. Interacts with CRY2. Interacts with PPIA/CYPA; the interaction is dependent on RNA-binding activity of TARDBP and PPIase activity of PPIA/CYPA. Acetylation of PPIA/CYPA at 'Lys-125' favors the interaction of TARDBP with PPIA/CYPA. Hyperphosphorylated. In terms of processing, ubiquitinated.

It is found in the nucleus. It localises to the cytoplasm. The protein resides in the stress granule. The protein localises to the mitochondrion. Its function is as follows. RNA-binding protein that is involved in various steps of RNA biogenesis and processing. Preferentially binds, via its two RNA recognition motifs RRM1 and RRM2, to GU-repeats on RNA molecules predominantly localized within long introns and in the 3'UTR of mRNAs. In turn, regulates the splicing of many non-coding and protein-coding RNAs including proteins involved in neuronal survival, as well as mRNAs that encode proteins relevant for neurodegenerative diseases. Plays a role in maintaining mitochondrial homeostasis by regulating the processing of mitochondrial transcripts. Also regulates mRNA stability by recruiting CNOT7/CAF1 deadenylase on mRNA 3'UTR leading to poly(A) tail deadenylation and thus shortening. In response to oxidative insult, associates with stalled ribosomes localized to stress granules (SGs) and contributes to cell survival. Also participates in the normal skeletal muscle formation and regeneration, forming cytoplasmic myo-granules and binding mRNAs that encode sarcomeric proteins. Plays a role in the maintenance of the circadian clock periodicity via stabilization of the CRY1 and CRY2 proteins in a FBXL3-dependent manner. Negatively regulates the expression of CDK6. Regulates the expression of HDAC6, ATG7 and VCP in a PPIA/CYPA-dependent manner. This chain is TAR DNA-binding protein 43 (Tardbp), found in Mus musculus (Mouse).